We begin with the raw amino-acid sequence, 214 residues long: Small ribosomal subunit protein uS5 (214 aa).

Positions 54-117 constitute an S5 DRBM domain; that stretch reads MKYEVIDIGM…RDAKMHVIPV (64 aa).

It belongs to the universal ribosomal protein uS5 family. Part of the 30S ribosomal subunit. Contacts protein S4.

Functionally, with S4 and S12 plays an important role in translational accuracy. The protein is Small ribosomal subunit protein uS5 of Metallosphaera sedula (strain ATCC 51363 / DSM 5348 / JCM 9185 / NBRC 15509 / TH2).